The sequence spans 466 residues: Histone acetyltransferase type B catalytic subunit DDB_G0275159 (466 aa).

The 198-residue stretch at 169 to 366 folds into the N-acetyltransferase domain; the sequence is AVFRYHEKLQ…FRIAIKKRLY (198 aa). Acetyl-CoA-binding positions include 240–242 and 247–253; these read YLI and QRMGHGK. The active-site Proton donor/acceptor is the glutamate 279. The stretch at 372-459 forms a coiled coil; that stretch reads DSEQIEKMKQ…LEENYHKTLS (88 aa).

It belongs to the HAT1 family.

It catalyses the reaction L-lysyl-[protein] + acetyl-CoA = N(6)-acetyl-L-lysyl-[protein] + CoA + H(+). The polypeptide is Histone acetyltransferase type B catalytic subunit DDB_G0275159 (Dictyostelium discoideum (Social amoeba)).